The following is a 515-amino-acid chain: Fatty acyl-CoA reductase 2 (515 aa).

The Cytoplasmic segment spans residues 1–465; that stretch reads MSMIAAFYGG…AKQHLKRLRN (465 aa). The chain crosses the membrane as a helical span at residues 466 to 484; the sequence is IHYLFNTALFLIAWRLLIA. Residues 485–515 lie on the Peroxisomal side of the membrane; it reads RSQVARNVWFFIVSFCYKFLSYFRASSTLNV.

Belongs to the fatty acyl-CoA reductase family.

Its subcellular location is the peroxisome membrane. It catalyses the reaction a long-chain fatty acyl-CoA + 2 NADPH + 2 H(+) = a long-chain primary fatty alcohol + 2 NADP(+) + CoA. The enzyme catalyses hexadecanoyl-CoA + 2 NADPH + 2 H(+) = hexadecan-1-ol + 2 NADP(+) + CoA. The catalysed reaction is octadecanoyl-CoA + 2 NADPH + 2 H(+) = octadecan-1-ol + 2 NADP(+) + CoA. It carries out the reaction a very long-chain fatty acyl-CoA + 2 NADPH + 2 H(+) = a very long-chain primary fatty alcohol + 2 NADP(+) + CoA. It catalyses the reaction an ultra-long-chain fatty acyl-CoA + 2 NADPH + 2 H(+) = an ultra long-chain primary fatty alcohol + 2 NADP(+) + CoA. The enzyme catalyses eicosanoyl-CoA + 2 NADPH + 2 H(+) = eicosan-1-ol + 2 NADP(+) + CoA. The catalysed reaction is docosanoyl-CoA + 2 NADPH + 2 H(+) = docosan-1-ol + 2 NADP(+) + CoA. It carries out the reaction tetracosanoyl-CoA + 2 NADPH + 2 H(+) = tetracosan-1-ol + 2 NADP(+) + CoA. It catalyses the reaction hexacosanoyl-CoA + 2 NADPH + 2 H(+) = hexacosan-1-ol + 2 NADP(+) + CoA. The enzyme catalyses octacosanoyl-CoA + 2 NADPH + 2 H(+) = octacosan-1-ol + 2 NADP(+) + CoA. The catalysed reaction is triacontanoyl-CoA + 2 NADPH + 2 H(+) = triacontan-1-ol + 2 NADP(+) + CoA. It carries out the reaction 18-methylnonadecanoyl-CoA + 2 NADPH + 2 H(+) = 18-methylnonadecan-1-ol + 2 NADP(+) + CoA. It catalyses the reaction 20-methylheneicosanoyl-CoA + 2 NADPH + 2 H(+) = 20-methylheneicosan-1-ol + 2 NADP(+) + CoA. The enzyme catalyses 22-methyltricosanoyl-CoA + 2 NADPH + 2 H(+) = 22-methyltricosan-1-ol + 2 NADP(+) + CoA. The catalysed reaction is 24-methylpentacosanoyl-CoA + 2 NADPH + 2 H(+) = 24-methylpentacosan-1-ol + 2 NADP(+) + CoA. Catalyzes the reduction of saturated but not unsaturated C16 or C18 fatty acyl-CoA to fatty alcohols (FAls). A lower activity can be observed with shorter fatty acyl-CoA substrates. Can produce very long-chain and ultra long-chain FAls, regardless of whether they have a straight or branched chain. Involved in the production of ether lipids/plasmalogens and wax monoesters whose synthesis requires FAls as substrates. The polypeptide is Fatty acyl-CoA reductase 2 (Bos taurus (Bovine)).